A 401-amino-acid polypeptide reads, in one-letter code: Multidrug resistance protein MdtH (401 aa).

Over 1–12 (MSRVSQARNLGK) the chain is Cytoplasmic. Residues 13–33 (YFLLIDNMLVVLGFFVVFPLV) form a helical membrane-spanning segment. The Periplasmic segment spans residues 34–98 (SIRFVDQMGW…GFATMGIAHE (65 aa)). The helical transmembrane segment at 99-116 (PWLLWFSCLLSGLGGTLF) threads the bilayer. At 117 to 137 (DPPRSALVVKLMPQQRGRFFS) the chain is on the cytoplasmic side. Residues 138–158 (LLMMQDSAGAVIGALLGSWLL) traverse the membrane as a helical segment. At 159 to 163 (QYDFR) the chain is on the periplasmic side. The chain crosses the membrane as a helical span at residues 164 to 184 (LVCATGAVLFVLCAAFNAWLL). Topologically, residues 185–212 (PAWKLSTIRTPVREGMTRVMRDKRFVTY) are cytoplasmic. A helical membrane pass occupies residues 213–233 (VLTLAGYYMLAVQVMLMLPIM). Topologically, residues 234–242 (VNDVAGAPS) are periplasmic. The helical transmembrane segment at 243-263 (AVKWMYAIEACLSLTLLYPIA) threads the bilayer. Over 264 to 275 (RWSEKHFRLEHR) the chain is Cytoplasmic. Residues 276-296 (LMAGLLIMSLSMMPVGMVSGL) form a helical membrane-spanning segment. Residues 297–298 (QQ) lie on the Periplasmic side of the membrane. Residues 299–319 (LFTLICLFYIGSIIAEPARET) form a helical membrane-spanning segment. Residues 320-338 (LSASLADARARGSYMGFSR) lie on the Cytoplasmic side of the membrane. The chain crosses the membrane as a helical span at residues 339 to 359 (LGLAIGGTIGYIGGGWLFDLG). Topologically, residues 360–366 (KSAHQPE) are periplasmic. A helical transmembrane segment spans residues 367–387 (LPWMMLGIIGIFTFLALGWQF). The Cytoplasmic segment spans residues 388–401 (SQKRAARRLLERDA).

Belongs to the major facilitator superfamily. DHA1 family. MdtH (TC 2.A.1.2.21) subfamily.

It is found in the cell inner membrane. The chain is Multidrug resistance protein MdtH from Shigella dysenteriae serotype 1 (strain Sd197).